A 400-amino-acid polypeptide reads, in one-letter code: Putative cytochrome P450 133B2 (400 aa).

Position 348 (Cys-348) interacts with heme.

The protein belongs to the cytochrome P450 family. Heme serves as cofactor.

This Xylella fastidiosa (strain 9a5c) protein is Putative cytochrome P450 133B2 (cyp133B2).